We begin with the raw amino-acid sequence, 208 residues long: FMRFamide-like neuropeptide 18 (208 aa).

The signal sequence occupies residues 1–21 (MQRWSGVLLISLCCLLRGALA). A propeptide spanning residues 22-83 (YTEPIYEIVE…VWEKRESSVQ (62 aa)) is cleaved from the precursor. Phenylalanine amide is present on F93. Positions 97–101 (AYFDE) are excised as a propeptide. F111 carries the post-translational modification Phenylalanine amide. A propeptide spanning residues 115-119 (SYFDE) is cleaved from the precursor. F129 bears the Phenylalanine amide mark. Residues 133 to 137 (DVPMD) constitute a propeptide that is removed on maturation. F147 is subject to Phenylalanine amide. The propeptide occupies 151-158 (DYMADSFD). Phenylalanine amide is present on residues F169 and F180. A propeptide spanning residues 184–195 (SDLEEHYAGVLL) is cleaved from the precursor. Position 205 is a phenylalanine amide (F205).

It belongs to the FARP (FMRFamide related peptide) family. Post-translationally, may be processed by convertase egl-3. Expressed in head neurons and weakly in ventral nerve cord. Expressed in the interneurons AVA, AIY and RIG, the motor neuron RIM and the pharyngeal neurons M2 and M3. EMPGVLRF-amide: Expressed in cholinergic pharyngeal motoneurons M2 and M3.

It localises to the secreted. In terms of biological role, FMRFamide-like neuropeptides. Ligand to G-protein coupled receptor npr-1. Involved in modulating locomotion quiescence during the sleep-like state called lethargus which occurs during molting between larval and adult stages, acting via npr-1. Together with flp-1, plays a homeostatic role by acting on the GABAergic neural transmission at neuromuscular junctions to prevent overexcitation of the locomotor circuit. Plays a role in the navigational capacity of sperm and the targeting of sperm derived from males to the fertilization site in the uterus of hermaphrodites. Its function is as follows. SVPGVLRF-amide: Excites muscle tension. Activates the G-protein coupled receptor npr-1 more effectively than other flp-18 peptides. Inhibits the activity of dissected pharyngeal myogenic muscle system. The sequence is that of FMRFamide-like neuropeptide 18 from Caenorhabditis elegans.